We begin with the raw amino-acid sequence, 528 residues long: GMP synthase [glutamine-hydrolyzing] (528 aa).

Positions 13–204 constitute a Glutamine amidotransferase type-1 domain; the sequence is SIVILDFGSQ…VHNICRSKPD (192 aa). Cysteine 90 serves as the catalytic Nucleophile. Residues histidine 178 and glutamate 180 contribute to the active site. In terms of domain architecture, GMPS ATP-PPase spans 205-403; it reads WTTNTFIDEA…LGLPEEIVNR (199 aa). Residue 232-238 participates in ATP binding; sequence SGGVDSS.

As to quaternary structure, homodimer.

The enzyme catalyses XMP + L-glutamine + ATP + H2O = GMP + L-glutamate + AMP + diphosphate + 2 H(+). It participates in purine metabolism; GMP biosynthesis; GMP from XMP (L-Gln route): step 1/1. In terms of biological role, catalyzes the synthesis of GMP from XMP. In Prochlorococcus marinus (strain SARG / CCMP1375 / SS120), this protein is GMP synthase [glutamine-hydrolyzing].